The sequence spans 374 residues: Chaperone protein DnaJ (374 aa).

Positions 5–70 constitute a J domain; it reads DFYEILGVSK…EKRSAYDRMG (66 aa). Residues 133–211 form a CR-type zinc finger; the sequence is GCKKEISFTA…CHGNGVKDKS (79 aa). Zn(2+)-binding residues include C146, C149, C163, C166, C185, C188, C199, and C202. 4 CXXCXGXG motif repeats span residues 146-153, 163-170, 185-192, and 199-206; these read CDTCDGKG, CQTCHGQG, CPHCGGTG, and CSDCHGNG.

The protein belongs to the DnaJ family. In terms of assembly, homodimer. Zn(2+) serves as cofactor.

The protein resides in the cytoplasm. Participates actively in the response to hyperosmotic and heat shock by preventing the aggregation of stress-denatured proteins and by disaggregating proteins, also in an autonomous, DnaK-independent fashion. Unfolded proteins bind initially to DnaJ; upon interaction with the DnaJ-bound protein, DnaK hydrolyzes its bound ATP, resulting in the formation of a stable complex. GrpE releases ADP from DnaK; ATP binding to DnaK triggers the release of the substrate protein, thus completing the reaction cycle. Several rounds of ATP-dependent interactions between DnaJ, DnaK and GrpE are required for fully efficient folding. Also involved, together with DnaK and GrpE, in the DNA replication of plasmids through activation of initiation proteins. This Psychrobacter arcticus (strain DSM 17307 / VKM B-2377 / 273-4) protein is Chaperone protein DnaJ.